A 367-amino-acid polypeptide reads, in one-letter code: tRNA 2-selenouridine synthase (367 aa).

Positions 15 to 138 (FLQARPLIDV…LRTFLIQILE (124 aa)) constitute a Rhodanese domain. Cys98 functions as the S-selanylcysteine intermediate in the catalytic mechanism.

Belongs to the SelU family. As to quaternary structure, monomer.

The enzyme catalyses 5-methylaminomethyl-2-thiouridine(34) in tRNA + selenophosphate + (2E)-geranyl diphosphate + H2O + H(+) = 5-methylaminomethyl-2-selenouridine(34) in tRNA + (2E)-thiogeraniol + phosphate + diphosphate. The catalysed reaction is 5-methylaminomethyl-2-thiouridine(34) in tRNA + (2E)-geranyl diphosphate = 5-methylaminomethyl-S-(2E)-geranyl-thiouridine(34) in tRNA + diphosphate. It carries out the reaction 5-methylaminomethyl-S-(2E)-geranyl-thiouridine(34) in tRNA + selenophosphate + H(+) = 5-methylaminomethyl-2-(Se-phospho)selenouridine(34) in tRNA + (2E)-thiogeraniol. It catalyses the reaction 5-methylaminomethyl-2-(Se-phospho)selenouridine(34) in tRNA + H2O = 5-methylaminomethyl-2-selenouridine(34) in tRNA + phosphate. Functionally, involved in the post-transcriptional modification of the uridine at the wobble position (U34) of tRNA(Lys), tRNA(Glu) and tRNA(Gln). Catalyzes the conversion of 2-thiouridine (S2U-RNA) to 2-selenouridine (Se2U-RNA). Acts in a two-step process involving geranylation of 2-thiouridine (S2U) to S-geranyl-2-thiouridine (geS2U) and subsequent selenation of the latter derivative to 2-selenouridine (Se2U) in the tRNA chain. This is tRNA 2-selenouridine synthase from Shewanella denitrificans (strain OS217 / ATCC BAA-1090 / DSM 15013).